The sequence spans 532 residues: GH3 domain-containing protein (532 aa).

An N-terminal signal peptide occupies residues 1-18 (MLLLWLLLLLLLLVPLLA). A disordered region spans residues 100–123 (LTQTSHTQEQESEETLPSPASPQY). 2 N-linked (GlcNAc...) asparagine glycosylation sites follow: Asn356 and Asn451.

Belongs to the GH3 family. Highly expressed in mammary tissues from mature virgins and at day 13 of pregnancy, and at lower level during lactation. Expressed at intermediate level in liver. Expressed at lower level in kidney, heart and brain.

It is found in the endoplasmic reticulum. It localises to the nucleus envelope. This Mus musculus (Mouse) protein is GH3 domain-containing protein (Ghdc).